A 559-amino-acid polypeptide reads, in one-letter code: Probable D-2-hydroxyglutarate dehydrogenase, mitochondrial (559 aa).

Residues 1-80 constitute a mitochondrion transit peptide; that stretch reads MARRAAAGLL…MNFEVQKRSF (80 aa). The 180-residue stretch at 131-310 folds into the FAD-binding PCMH-type domain; sequence YKGSSQLLLL…TKIAILTPAK (180 aa).

The protein belongs to the FAD-binding oxidoreductase/transferase type 4 family. In terms of assembly, homodimer. FAD is required as a cofactor.

It localises to the mitochondrion. The enzyme catalyses (R)-2-hydroxyglutarate + A = 2-oxoglutarate + AH2. Functionally, catalyzes the oxidation of D-2-hydroxyglutarate to alpha-ketoglutarate. The polypeptide is Probable D-2-hydroxyglutarate dehydrogenase, mitochondrial (D2HGDH) (Oryza sativa subsp. japonica (Rice)).